The chain runs to 101 residues: Small ribosomal subunit protein uS14 (101 aa).

It belongs to the universal ribosomal protein uS14 family. As to quaternary structure, part of the 30S ribosomal subunit. Contacts proteins S3 and S10.

In terms of biological role, binds 16S rRNA, required for the assembly of 30S particles and may also be responsible for determining the conformation of the 16S rRNA at the A site. The polypeptide is Small ribosomal subunit protein uS14 (Bordetella parapertussis (strain 12822 / ATCC BAA-587 / NCTC 13253)).